The sequence spans 173 residues: Cytochrome c-type biogenesis protein CcmE (173 aa).

The Cytoplasmic segment spans residues 1–7 (MTRKSRR). The helical; Signal-anchor for type II membrane protein transmembrane segment at 8 to 28 (LILIAACGAVLALALGLILSA) threads the bilayer. Residues 29–173 (MSGSIVFFRS…DATLGQRSER (145 aa)) lie on the Periplasmic side of the membrane. Residues histidine 122 and tyrosine 126 each contribute to the heme site. Residues 134–173 (ALKAQGRWQEGGGKDASKAAPKDAAKPETADATLGQRSER) are disordered. The span at 145–162 (GGKDASKAAPKDAAKPET) shows a compositional bias: basic and acidic residues.

The protein belongs to the CcmE/CycJ family.

The protein localises to the cell inner membrane. Functionally, heme chaperone required for the biogenesis of c-type cytochromes. Transiently binds heme delivered by CcmC and transfers the heme to apo-cytochromes in a process facilitated by CcmF and CcmH. The sequence is that of Cytochrome c-type biogenesis protein CcmE from Methylorubrum extorquens (strain CM4 / NCIMB 13688) (Methylobacterium extorquens).